We begin with the raw amino-acid sequence, 225 residues long: Rho GDP-dissociation inhibitor 3 (225 aa).

The protein belongs to the Rho GDI family. As to expression, detected only in brain, lung, kidney and testis.

The protein localises to the cytoplasm. In terms of biological role, inhibits GDP/GTP exchange reaction of RhoB. Interacts specifically with the GDP- and GTP-bound forms of post-translationally processed Rhob and Rhog proteins, both of which show a growth-regulated expression in mammalian cells. Stimulates the release of the GDP-bound but not the GTP-bound RhoB protein. Also inhibits the GDP/GTP exchange of RhoB but shows less ability to inhibit the dissociation of prebound GTP. This is Rho GDP-dissociation inhibitor 3 (Arhgdig) from Mus musculus (Mouse).